The chain runs to 254 residues: MIALLSPAKTLDLTKPNLDIETSKPIFISEAEVIMNNLKELEIQDLCPLMKISEDLGVQTFTKIQDWNTIYYGDEKPFVLSFKGEAYRGLDADDFTKEDLEFCNDSLRILSGLYGALKPLDGTKAYRLEMGTKISIDGSKNLYDFWGNKIMDSLLKDLENHKEKVIINLASNEYYKSIKQIDKKVRVITPVFKERKGIEYKVVTVYAKKARGQMVRYITKNRITKSEDLKNFDLYGYEFNERLSEGDTWVFTRD.

It belongs to the UPF0246 family.

The sequence is that of UPF0246 protein CPR_2119 from Clostridium perfringens (strain SM101 / Type A).